Here is a 427-residue protein sequence, read N- to C-terminus: Acetyl-CoA acetyltransferase, mitochondrial (427 aa).

The transit peptide at 1 to 33 (MAVLAALLRSGARSRSPLLRRLVQEIRYVERSY) directs the protein to the mitochondrion. N6-acetyllysine; alternate is present on Lys-66. Position 66 is an N6-succinyllysine; alternate (Lys-66). Position 78 is an N6-succinyllysine (Lys-78). Cys-126 (acyl-thioester intermediate) is an active-site residue. N6-acetyllysine; alternate is present on residues Lys-174, Lys-181, Lys-190, and Lys-202. Lys-174, Lys-181, Lys-190, and Lys-202 each carry N6-succinyllysine; alternate. Residue Tyr-219 coordinates CoA. Position 219 (Tyr-219) interacts with K(+). Lys-223 and Lys-230 each carry N6-acetyllysine; alternate. N6-succinyllysine; alternate occurs at positions 223 and 230. An N6-succinyllysine modification is found at Lys-243. An N6-acetyllysine mark is found at Lys-251 and Lys-257. CoA is bound by residues 258–260 (RVD) and Lys-263. The residue at position 263 (Lys-263) is an N6-acetyllysine; alternate. Lys-263 carries the post-translational modification N6-succinyllysine; alternate. N6-succinyllysine is present on residues Lys-266 and Lys-268. Residue Lys-273 is modified to N6-acetyllysine. K(+) is bound by residues Ala-280, Ala-281, and Ala-283. Ser-284 lines the CoA pocket. Lys-338 is modified (N6-acetyllysine). Val-381 contributes to the K(+) binding site. Cys-413 acts as the Proton donor/acceptor in catalysis.

Belongs to the thiolase-like superfamily. Thiolase family. In terms of assembly, homotetramer. Succinylation at Lys-268, adjacent to a coenzyme A binding site. Desuccinylated by SIRT5.

Its subcellular location is the mitochondrion. The enzyme catalyses 2 acetyl-CoA = acetoacetyl-CoA + CoA. It catalyses the reaction propanoyl-CoA + acetyl-CoA = 2-methyl-3-oxobutanoyl-CoA + CoA. It participates in lipid metabolism; fatty acid beta-oxidation. Activated by potassium ions, but not sodium ions. Functionally, this is one of the enzymes that catalyzes the last step of the mitochondrial beta-oxidation pathway, an aerobic process breaking down fatty acids into acetyl-CoA. Using free coenzyme A/CoA, catalyzes the thiolytic cleavage of medium- to long-chain 3-oxoacyl-CoAs into acetyl-CoA and a fatty acyl-CoA shortened by two carbon atoms. The activity of the enzyme is reversible and it can also catalyze the condensation of two acetyl-CoA molecules into acetoacetyl-CoA. Thereby, it plays a major role in ketone body metabolism. This Homo sapiens (Human) protein is Acetyl-CoA acetyltransferase, mitochondrial (ACAT1).